The following is a 127-amino-acid chain: Apolipoprotein C-IV (127 aa).

Positions 1 to 27 (MSLLRNRLQALPALCLCVLVLACIGAC) are cleaved as a signal peptide. A glycan (N-linked (GlcNAc...) asparagine) is linked at Asn-63.

This sequence belongs to the apolipoprotein C4 family. Expressed by the liver and secreted in plasma.

The protein resides in the secreted. In terms of biological role, may participate in lipoprotein metabolism. The polypeptide is Apolipoprotein C-IV (APOC4) (Homo sapiens (Human)).